We begin with the raw amino-acid sequence, 213 residues long: Thiamine-phosphate synthase (213 aa).

4-amino-2-methyl-5-(diphosphooxymethyl)pyrimidine-binding positions include 40–44 (QFREK) and Asn-75. Positions 76 and 95 each coordinate Mg(2+). Ser-113 provides a ligand contact to 4-amino-2-methyl-5-(diphosphooxymethyl)pyrimidine. 139–141 (TPS) is a binding site for 2-[(2R,5Z)-2-carboxy-4-methylthiazol-5(2H)-ylidene]ethyl phosphate. Lys-142 is a binding site for 4-amino-2-methyl-5-(diphosphooxymethyl)pyrimidine. 2-[(2R,5Z)-2-carboxy-4-methylthiazol-5(2H)-ylidene]ethyl phosphate is bound by residues Gly-171 and 191 to 192 (IS).

The protein belongs to the thiamine-phosphate synthase family. Requires Mg(2+) as cofactor.

It carries out the reaction 2-[(2R,5Z)-2-carboxy-4-methylthiazol-5(2H)-ylidene]ethyl phosphate + 4-amino-2-methyl-5-(diphosphooxymethyl)pyrimidine + 2 H(+) = thiamine phosphate + CO2 + diphosphate. The enzyme catalyses 2-(2-carboxy-4-methylthiazol-5-yl)ethyl phosphate + 4-amino-2-methyl-5-(diphosphooxymethyl)pyrimidine + 2 H(+) = thiamine phosphate + CO2 + diphosphate. It catalyses the reaction 4-methyl-5-(2-phosphooxyethyl)-thiazole + 4-amino-2-methyl-5-(diphosphooxymethyl)pyrimidine + H(+) = thiamine phosphate + diphosphate. It participates in cofactor biosynthesis; thiamine diphosphate biosynthesis; thiamine phosphate from 4-amino-2-methyl-5-diphosphomethylpyrimidine and 4-methyl-5-(2-phosphoethyl)-thiazole: step 1/1. In terms of biological role, condenses 4-methyl-5-(beta-hydroxyethyl)thiazole monophosphate (THZ-P) and 2-methyl-4-amino-5-hydroxymethyl pyrimidine pyrophosphate (HMP-PP) to form thiamine monophosphate (TMP). In Staphylococcus aureus (strain bovine RF122 / ET3-1), this protein is Thiamine-phosphate synthase.